We begin with the raw amino-acid sequence, 264 residues long: S-adenosylmethionine decarboxylase proenzyme (264 aa).

Residue Ser112 is the Schiff-base intermediate with substrate; via pyruvic acid of the active site. A Pyruvic acid (Ser); by autocatalysis modification is found at Ser112. His117 acts as the Proton acceptor; for processing activity in catalysis. The active-site Proton donor; for catalytic activity is the Cys140.

This sequence belongs to the prokaryotic AdoMetDC family. Type 2 subfamily. In terms of assembly, heterooctamer of four alpha and four beta chains arranged as a tetramer of alpha/beta heterodimers. It depends on pyruvate as a cofactor. Post-translationally, is synthesized initially as an inactive proenzyme. Formation of the active enzyme involves a self-maturation process in which the active site pyruvoyl group is generated from an internal serine residue via an autocatalytic post-translational modification. Two non-identical subunits are generated from the proenzyme in this reaction, and the pyruvate is formed at the N-terminus of the alpha chain, which is derived from the carboxyl end of the proenzyme. The post-translation cleavage follows an unusual pathway, termed non-hydrolytic serinolysis, in which the side chain hydroxyl group of the serine supplies its oxygen atom to form the C-terminus of the beta chain, while the remainder of the serine residue undergoes an oxidative deamination to produce ammonia and the pyruvoyl group blocking the N-terminus of the alpha chain.

The catalysed reaction is S-adenosyl-L-methionine + H(+) = S-adenosyl 3-(methylsulfanyl)propylamine + CO2. The protein operates within amine and polyamine biosynthesis; S-adenosylmethioninamine biosynthesis; S-adenosylmethioninamine from S-adenosyl-L-methionine: step 1/1. In terms of biological role, catalyzes the decarboxylation of S-adenosylmethionine to S-adenosylmethioninamine (dcAdoMet), the propylamine donor required for the synthesis of the polyamines spermine and spermidine from the diamine putrescine. This is S-adenosylmethionine decarboxylase proenzyme from Salmonella choleraesuis (strain SC-B67).